We begin with the raw amino-acid sequence, 280 residues long: MKLCHFEAGLDQPLFLISGPCVIESEQLAMDTAGQLKEMCAGLGIPFIYKSSFDKANRSSTKSFRGLGLEEGLRILADVKAKIGVPVLTDVHEDTPLDEVAAVVDVLQTPAFLCRQTNFIQNVARAGRPVNIKKGQFLAPWDMQNVVDKAREVGNDQIMVCERGVSFGYNTLVSDMRGLAIMRGTGCPVVFDATHSVQQPGGQGATSGGQREFVPVLARAAVASGVAGVFAETHPDPACALSDGPNAWPLGMMRELLETLKEIDALVKQRGFIEHKLMKA.

The protein belongs to the KdsA family.

The protein resides in the cytoplasm. It carries out the reaction D-arabinose 5-phosphate + phosphoenolpyruvate + H2O = 3-deoxy-alpha-D-manno-2-octulosonate-8-phosphate + phosphate. Its pathway is carbohydrate biosynthesis; 3-deoxy-D-manno-octulosonate biosynthesis; 3-deoxy-D-manno-octulosonate from D-ribulose 5-phosphate: step 2/3. It participates in bacterial outer membrane biogenesis; lipopolysaccharide biosynthesis. The sequence is that of 2-dehydro-3-deoxyphosphooctonate aldolase from Thiobacillus denitrificans (strain ATCC 25259 / T1).